The primary structure comprises 284 residues: Pantothenate synthetase (284 aa).

30-37 (MGALHEGH) contributes to the ATP binding site. The Proton donor role is filled by His37. Gln61 is a binding site for (R)-pantoate. Residue Gln61 coordinates beta-alanine. 147–150 (GEKD) is an ATP binding site. A (R)-pantoate-binding site is contributed by Gln153. Residues Val176 and 184 to 187 (TSSR) contribute to the ATP site.

It belongs to the pantothenate synthetase family. In terms of assembly, homodimer.

The protein resides in the cytoplasm. The catalysed reaction is (R)-pantoate + beta-alanine + ATP = (R)-pantothenate + AMP + diphosphate + H(+). Its pathway is cofactor biosynthesis; (R)-pantothenate biosynthesis; (R)-pantothenate from (R)-pantoate and beta-alanine: step 1/1. Functionally, catalyzes the condensation of pantoate with beta-alanine in an ATP-dependent reaction via a pantoyl-adenylate intermediate. The protein is Pantothenate synthetase of Chlorobaculum tepidum (strain ATCC 49652 / DSM 12025 / NBRC 103806 / TLS) (Chlorobium tepidum).